A 162-amino-acid polypeptide reads, in one-letter code: 2-C-methyl-D-erythritol 2,4-cyclodiphosphate synthase (162 aa).

2 residues coordinate a divalent metal cation: aspartate 8 and histidine 10. 4-CDP-2-C-methyl-D-erythritol 2-phosphate-binding positions include 8–10 and 36–37; these read DVH and HS. Residue histidine 44 coordinates a divalent metal cation. Residues 58–60, 63–67, 102–108, 134–137, phenylalanine 141, and arginine 144 contribute to the 4-CDP-2-C-methyl-D-erythritol 2-phosphate site; these read DIG, FPDTD, AQAPKMA, and TTTE.

The protein belongs to the IspF family. Homotrimer. It depends on a divalent metal cation as a cofactor.

It carries out the reaction 4-CDP-2-C-methyl-D-erythritol 2-phosphate = 2-C-methyl-D-erythritol 2,4-cyclic diphosphate + CMP. Its pathway is isoprenoid biosynthesis; isopentenyl diphosphate biosynthesis via DXP pathway; isopentenyl diphosphate from 1-deoxy-D-xylulose 5-phosphate: step 4/6. Its function is as follows. Involved in the biosynthesis of isopentenyl diphosphate (IPP) and dimethylallyl diphosphate (DMAPP), two major building blocks of isoprenoid compounds. Catalyzes the conversion of 4-diphosphocytidyl-2-C-methyl-D-erythritol 2-phosphate (CDP-ME2P) to 2-C-methyl-D-erythritol 2,4-cyclodiphosphate (ME-CPP) with a corresponding release of cytidine 5-monophosphate (CMP). The sequence is that of 2-C-methyl-D-erythritol 2,4-cyclodiphosphate synthase from Yersinia pseudotuberculosis serotype IB (strain PB1/+).